Reading from the N-terminus, the 121-residue chain is Putative iron-sulfur cluster insertion protein ErpA 1 (121 aa).

Residues Cys-49, Cys-113, and Cys-115 each contribute to the iron-sulfur cluster site.

Belongs to the HesB/IscA family. In terms of assembly, homodimer. Requires iron-sulfur cluster as cofactor.

In terms of biological role, required for insertion of 4Fe-4S clusters. This Polaromonas naphthalenivorans (strain CJ2) protein is Putative iron-sulfur cluster insertion protein ErpA 1.